The sequence spans 183 residues: Ran guanine nucleotide release factor (183 aa).

Residues 23 to 66 form an interaction with RAN region; sequence ELRQIPDNQEVFAHSQTDQSIIIELLEYQSQVQDADAARYHFED.

Belongs to the MOG1 family. As to quaternary structure, monomer. Interacts with ran.

The protein localises to the nucleus. Its subcellular location is the cytoplasm. The protein resides in the perinuclear region. It localises to the cell membrane. Functionally, may regulate the intracellular trafficking of RAN. Promotes guanine nucleotide release from RAN and inhibits binding of new GTP. Plays a role in the regulation of the levels of GTP-bound RAN in the nucleus. Required for normal expression of the ion channel hcn4 and for normal expression of the cardiac transcription factors nkx2.5, gata4 and hand2 during embryonic development. Required for normal embryonic heart development and normal heart rate. This chain is Ran guanine nucleotide release factor, found in Danio rerio (Zebrafish).